The following is a 201-amino-acid chain: Small ribosomal subunit protein uS5 (201 aa).

Positions 1–28 are disordered; sequence MAGPQRRGSGAGGGERRDRKGRDGGASA. Over residues 14–23 the composition is skewed to basic and acidic residues; that stretch reads GERRDRKGRD. Positions 34–97 constitute an S5 DRBM domain; it reads YVERVVAINR…EEAKKNFFKV (64 aa).

Belongs to the universal ribosomal protein uS5 family. As to quaternary structure, part of the 30S ribosomal subunit. Contacts proteins S4 and S8.

In terms of biological role, with S4 and S12 plays an important role in translational accuracy. Functionally, located at the back of the 30S subunit body where it stabilizes the conformation of the head with respect to the body. In Streptomyces griseus subsp. griseus (strain JCM 4626 / CBS 651.72 / NBRC 13350 / KCC S-0626 / ISP 5235), this protein is Small ribosomal subunit protein uS5.